The following is a 356-amino-acid chain: Septin-12 (356 aa).

Residues Met1–Glu23 are disordered. Low complexity predominate over residues Pro7–Ser16. Positions Thr44 to Glu315 constitute a Septin-type G domain. Positions Thr44–His317 are interaction with SEPTIN7. The tract at residues Gly54–Ser61 is G1 motif. GTP contacts are provided by residues Gly54–Ser61, Thr87, Gly113, Arg193–Glu201, Gly249, and Arg264. The G3 motif stretch occupies residues Asp110–Gly113. A G4 motif region spans residues Ala192 to Asp195. A self-association (via N-terminus) to polymerize octameric septin 12-7-6-2/4-2/4-6-7-12 filaments region spans residues Val256–Cys356. The interval Pro330–Cys356 is disordered.

Belongs to the TRAFAC class TrmE-Era-EngA-EngB-Septin-like GTPase superfamily. Septin GTPase family. As to quaternary structure, septins polymerize into heterooligomeric protein complexes that form filaments, and can associate with cellular membranes, actin filaments and microtubules. GTPase activity is required for filament formation. Interacts with SEPTIN6 and SEPTIN11. Self-associates. Component of a octameric complex consisting of SEPTIN12, SEPTIN7, SEPTIN6 and SEPTIN2 or SEPTIN4 in the order 12-7-6-2-2-6-7-12 or 12-7-6-4-4-6-7-12 and located in the sperm annulus; the octamer polymerizes into filaments via the SEPTIN12 N- and C-termini; the SEPTIN12:SEPTIN7 association is mediated by the GTP-binding domains. Interacts with SPAG4 and LMNB1. Associates with alpha- and beta-tubulins. Predominantly expressed in testis and epididymis. Component of the sperm tail annulus (at protein level).

It localises to the cytoplasm. It is found in the cytoskeleton. The protein localises to the spindle. The protein resides in the cell projection. Its subcellular location is the cilium. It localises to the flagellum. Functionally, filament-forming cytoskeletal GTPase. May play a role in cytokinesis (Potential). Involved in spermatogenesis. Involved in the morphogenesis of sperm heads and the elongation of sperm tails probably implicating the association with alpha- and beta-tubulins. Forms a filamentous structure with SEPTIN7, SEPTIN6, SEPTIN2 and probably SEPTIN4 at the sperm annulus which is required for the structural integrity and motility of the sperm tail during postmeiotic differentiation. This chain is Septin-12, found in Rattus norvegicus (Rat).